The chain runs to 667 residues: Protein angel homolog 1 (667 aa).

Phosphoserine occurs at positions 77 and 105.

The protein belongs to the CCR4/nocturin family.

The sequence is that of Protein angel homolog 1 from Mus musculus (Mouse).